Reading from the N-terminus, the 642-residue chain is Threonine--tRNA ligase (642 aa).

In terms of domain architecture, TGS spans methionine 1 to threonine 61. The catalytic stretch occupies residues aspartate 243–proline 534. 3 residues coordinate Zn(2+): cysteine 334, histidine 385, and histidine 511.

Belongs to the class-II aminoacyl-tRNA synthetase family. As to quaternary structure, homodimer. Zn(2+) is required as a cofactor.

It is found in the cytoplasm. It catalyses the reaction tRNA(Thr) + L-threonine + ATP = L-threonyl-tRNA(Thr) + AMP + diphosphate + H(+). In terms of biological role, catalyzes the attachment of threonine to tRNA(Thr) in a two-step reaction: L-threonine is first activated by ATP to form Thr-AMP and then transferred to the acceptor end of tRNA(Thr). Also edits incorrectly charged L-seryl-tRNA(Thr). In Salmonella paratyphi C (strain RKS4594), this protein is Threonine--tRNA ligase.